The chain runs to 174 residues: RNA polymerase sigma factor CarQ (174 aa).

Residues 39 to 52 carry the Polymerase core binding motif; that stretch reads DLLQATFLSVIRSR. Positions 86–106 are disordered; the sequence is YASREDTATPASAAPDDSDPS. Residues 136–155 constitute a DNA-binding region (H-T-H motif); the sequence is FEEIGALRGISPGAARLRAH.

Belongs to the sigma-70 factor family. ECF subfamily.

Its function is as follows. Sigma factors are initiation factors that promote the attachment of RNA polymerase to specific initiation sites and are then released. This sigma factor regulates genes for the light induced biosynthesis of carotenoids. The sequence is that of RNA polymerase sigma factor CarQ (carQ) from Myxococcus xanthus.